A 338-amino-acid chain; its full sequence is MTTLRLLISDSYDPWFNLAVEECIFRQMPATQRVLFLWRNADTVVIGRAQNPWKECNTRRMEEDNVRLARRSSGGGAVFHDLGNTCFTFMAGKPEYDKTISTHIVLAALNSLGVMADASGRNDLVVKTPDGDRKVSGSAYRETKDRGFHHGTLLLNADLSRLANYLNPDKKKLAAKGITSVRSRVANLTELLPGITHEQVCQAVTEAFFAHYGERVDAEVISPDKTPDLPNFAETFARQSSWEWNFGQAPAFSHLLDERFTWGGVELHFDVEKGVITRAQAFTDSLNPAPLEALAERLQGCLYRADKLQETCEALLVDFPEQEKELRELSAWIAEAVR.

One can recognise a BPL/LPL catalytic domain in the interval 29–216 (PATQRVLFLW…AFFAHYGERV (188 aa)). Residues arginine 71, 76-79 (GAVF), and lysine 134 each bind ATP. Lysine 134 provides a ligand contact to (R)-lipoate.

This sequence belongs to the LplA family. In terms of assembly, monomer.

Its subcellular location is the cytoplasm. It catalyses the reaction L-lysyl-[lipoyl-carrier protein] + (R)-lipoate + ATP = N(6)-[(R)-lipoyl]-L-lysyl-[lipoyl-carrier protein] + AMP + diphosphate + H(+). It participates in protein modification; protein lipoylation via exogenous pathway; protein N(6)-(lipoyl)lysine from lipoate: step 1/2. Its pathway is protein modification; protein lipoylation via exogenous pathway; protein N(6)-(lipoyl)lysine from lipoate: step 2/2. Functionally, catalyzes both the ATP-dependent activation of exogenously supplied lipoate to lipoyl-AMP and the transfer of the activated lipoyl onto the lipoyl domains of lipoate-dependent enzymes. The sequence is that of Lipoate-protein ligase A from Salmonella typhimurium (strain LT2 / SGSC1412 / ATCC 700720).